The chain runs to 350 residues: tRNA uridine(34) hydroxylase (350 aa).

The Rhodanese domain occupies 146-240 (DDPDALFIDM…YARKAREQGL (95 aa)). Cys-200 functions as the Cysteine persulfide intermediate in the catalytic mechanism.

The protein belongs to the TrhO family.

The catalysed reaction is uridine(34) in tRNA + AH2 + O2 = 5-hydroxyuridine(34) in tRNA + A + H2O. Functionally, catalyzes oxygen-dependent 5-hydroxyuridine (ho5U) modification at position 34 in tRNAs, the first step in 5-carboxymethoxyuridine (cmo5U) biosynthesis. May be part of an alternate pathway, which is able to bypass cmo5U biogenesis in a subset of tRNAs under aerobic conditions. The sequence is that of tRNA uridine(34) hydroxylase from Escherichia coli O127:H6 (strain E2348/69 / EPEC).